A 125-amino-acid polypeptide reads, in one-letter code: Small ribosomal subunit protein bS6 (125 aa).

Positions 99 to 125 (PSIMMKSVEREEARKASTEASAPAQAQ) are disordered. The span at 105–115 (SVEREEARKAS) shows a compositional bias: basic and acidic residues. Residues 116 to 125 (TEASAPAQAQ) show a composition bias toward polar residues.

This sequence belongs to the bacterial ribosomal protein bS6 family.

In terms of biological role, binds together with bS18 to 16S ribosomal RNA. This chain is Small ribosomal subunit protein bS6, found in Bordetella petrii (strain ATCC BAA-461 / DSM 12804 / CCUG 43448).